Consider the following 186-residue polypeptide: Threonylcarbamoyl-AMP synthase (186 aa).

The region spanning 6–186 (GFRLRLAANA…FDAMSGRRIR (181 aa)) is the YrdC-like domain.

Belongs to the SUA5 family. TsaC subfamily.

The protein localises to the cytoplasm. The catalysed reaction is L-threonine + hydrogencarbonate + ATP = L-threonylcarbamoyladenylate + diphosphate + H2O. In terms of biological role, required for the formation of a threonylcarbamoyl group on adenosine at position 37 (t(6)A37) in tRNAs that read codons beginning with adenine. Catalyzes the conversion of L-threonine, HCO(3)(-)/CO(2) and ATP to give threonylcarbamoyl-AMP (TC-AMP) as the acyladenylate intermediate, with the release of diphosphate. The sequence is that of Threonylcarbamoyl-AMP synthase from Methylococcus capsulatus (strain ATCC 33009 / NCIMB 11132 / Bath).